The chain runs to 329 residues: tRNA dimethylallyltransferase (329 aa).

An ATP-binding site is contributed by 12–19 (GPTSVGKT). Residue 14-19 (TSVGKT) participates in substrate binding. The interval 37–40 (DSRY) is interaction with substrate tRNA. The disordered stretch occupies residues 306 to 329 (LREESDEGDVAVHQSGGGKEAPRA). The span at 320–329 (SGGGKEAPRA) shows a compositional bias: gly residues.

It belongs to the IPP transferase family. In terms of assembly, monomer. It depends on Mg(2+) as a cofactor.

The enzyme catalyses adenosine(37) in tRNA + dimethylallyl diphosphate = N(6)-dimethylallyladenosine(37) in tRNA + diphosphate. In terms of biological role, catalyzes the transfer of a dimethylallyl group onto the adenine at position 37 in tRNAs that read codons beginning with uridine, leading to the formation of N6-(dimethylallyl)adenosine (i(6)A). The protein is tRNA dimethylallyltransferase of Thermomicrobium roseum (strain ATCC 27502 / DSM 5159 / P-2).